The primary structure comprises 621 residues: Nuclear distribution protein nudE homolog 1 (621 aa).

Composition is skewed to polar residues over residues 1–20 (MPSA…SRSD) and 231–263 (RSPS…TLKT). Disordered stretches follow at residues 1-21 (MPSA…RSDQ), 218-372 (ELQN…PKSG), 389-537 (ERVQ…GVVN), and 569-621 (ISTP…GETY). Residues 18-219 (RSDQLAWYKS…IHEKLRNAEL (202 aa)) adopt a coiled-coil conformation. Composition is skewed to low complexity over residues 264 to 288 (SLMS…RKSM) and 300 to 310 (SASDSSFGSRS). The segment covering 323–341 (SRATSYAFTSNRPTPSVTN) has biased composition (polar residues). Low complexity-rich tracts occupy residues 353 to 362 (NENTNKHNNN), 404 to 414 (SPSRTSSRSGS), and 469 to 496 (SRPS…PSTR). Positions 599–613 (DRLEGDMGPPERKSN) are enriched in basic and acidic residues.

It belongs to the nudE family. In terms of assembly, self-associates. Interacts with nudF.

It is found in the cytoplasm. Its subcellular location is the cytoskeleton. Functionally, required for nuclear migration within hyphae during vegetative growth. The sequence is that of Nuclear distribution protein nudE homolog 1 (nde1) from Aspergillus fumigatus (strain ATCC MYA-4609 / CBS 101355 / FGSC A1100 / Af293) (Neosartorya fumigata).